The primary structure comprises 345 residues: Methionine import ATP-binding protein MetN (345 aa).

An ABC transporter domain is found at isoleucine 2–isoleucine 241. Glycine 38–serine 45 serves as a coordination point for ATP.

Belongs to the ABC transporter superfamily. Methionine importer (TC 3.A.1.24) family. The complex is composed of two ATP-binding proteins (MetN), two transmembrane proteins (MetI) and a solute-binding protein (MetQ).

The protein localises to the cell inner membrane. The catalysed reaction is L-methionine(out) + ATP + H2O = L-methionine(in) + ADP + phosphate + H(+). The enzyme catalyses D-methionine(out) + ATP + H2O = D-methionine(in) + ADP + phosphate + H(+). Part of the ABC transporter complex MetNIQ involved in methionine import. Responsible for energy coupling to the transport system. This is Methionine import ATP-binding protein MetN from Haemophilus influenzae (strain 86-028NP).